The sequence spans 223 residues: Membrane-associated progesterone receptor component 2 (223 aa).

Residues 1-33 (MAAGDGDVKLGTLGSGSESSNDGGSESPGDAGA) form a disordered region. Ser15 is a glycosylation site (O-linked (Xyl...) (chondroitin sulfate) serine). A compositionally biased stretch (low complexity) spans 15 to 33 (SGSESSNDGGSESPGDAGA). A helical transmembrane segment spans residues 42–66 (AAALALLTGGGEMLLNVALVALVLL). Ser90, Ser104, and Ser208 each carry phosphoserine. Residues 102–201 (DFSLEQLRQY…EKYDYVGRLL (100 aa)) form the Cytochrome b5 heme-binding domain. The disordered stretch occupies residues 202-223 (KPGEEPSEYTDEEDTKDHNKQD). The span at 206–215 (EPSEYTDEED) shows a compositional bias: acidic residues. Tyr210 carries the post-translational modification Phosphotyrosine. A Phosphothreonine modification is found at Thr211.

It belongs to the cytochrome b5 family. MAPR subfamily. In terms of assembly, interacts with PGRMC1. Interacts with AAAS. As to expression, expressed by endometrial glands and stroma (at protein level). Detected in urine (at protein level).

The protein localises to the membrane. Its subcellular location is the nucleus envelope. It localises to the endoplasmic reticulum. The protein resides in the secreted. Required for the maintenance of uterine histoarchitecture and normal female reproductive lifespan. May serve as a universal non-classical progesterone receptor in the uterus. Intracellular heme chaperone required for delivery of labile, or signaling heme, to the nucleus. Plays a role in adipocyte function and systemic glucose homeostasis. In brown fat, which has a high demand for heme, delivery of labile heme in the nucleus regulates the activity of heme-responsive transcriptional repressors such as NR1D1 and BACH1. In Homo sapiens (Human), this protein is Membrane-associated progesterone receptor component 2.